Here is a 57-residue protein sequence, read N- to C-terminus: Metallothionein-2 (57 aa).

Residues 1-28 form a beta region; that stretch reads PDPCCNDKCDCKEGECKTGCKCTSCRCP. A divalent metal cation-binding residues include Cys4, Cys5, Cys9, Cys11, Cys16, Cys20, Cys22, Cys25, Cys27, Cys30, Cys33, Cys37, Cys39, Cys45, Cys49, Cys53, Cys55, and Cys56. The alpha stretch occupies residues 29–57; sequence PCEQCSSGCKCANKEDCRKTCSKPCSCCP.

This sequence belongs to the metallothionein superfamily. Type 3 family.

In terms of biological role, metallothioneins have a high content of cysteine residues that bind various heavy metals. Class I MTS in marine crustacea are involved in the sequestration of elevated levels of heavy-metal ions. This is Metallothionein-2 from Scylla serrata (Mud crab).